Reading from the N-terminus, the 379-residue chain is Chaperone protein DnaJ (379 aa).

A J domain is found at 5–69 (DYYEVLGISK…NKRASYDQFG (65 aa)). The CR-type zinc finger occupies 136-218 (GTTKEISIRK…CHGKGTENKT (83 aa)). Cys-149, Cys-152, Cys-166, Cys-169, Cys-192, Cys-195, Cys-206, and Cys-209 together coordinate Zn(2+). 4 CXXCXGXG motif repeats span residues 149–156 (CETCHGDG), 166–173 (CSYCNGAG), 192–199 (CPKCNGSG), and 206–213 (CPTCHGKG).

This sequence belongs to the DnaJ family. In terms of assembly, homodimer. Zn(2+) is required as a cofactor.

The protein localises to the cytoplasm. Its function is as follows. Participates actively in the response to hyperosmotic and heat shock by preventing the aggregation of stress-denatured proteins and by disaggregating proteins, also in an autonomous, DnaK-independent fashion. Unfolded proteins bind initially to DnaJ; upon interaction with the DnaJ-bound protein, DnaK hydrolyzes its bound ATP, resulting in the formation of a stable complex. GrpE releases ADP from DnaK; ATP binding to DnaK triggers the release of the substrate protein, thus completing the reaction cycle. Several rounds of ATP-dependent interactions between DnaJ, DnaK and GrpE are required for fully efficient folding. Also involved, together with DnaK and GrpE, in the DNA replication of plasmids through activation of initiation proteins. The polypeptide is Chaperone protein DnaJ (Staphylococcus aureus (strain USA300 / TCH1516)).